A 251-amino-acid polypeptide reads, in one-letter code: Ditrans,polycis-undecaprenyl-diphosphate synthase ((2E,6E)-farnesyl-diphosphate specific) (251 aa).

D29 is an active-site residue. D29 lines the Mg(2+) pocket. Substrate is bound by residues 30–33 (GNGK), W34, R42, H46, and 74–76 (SSD). The active-site Proton acceptor is N77. Residues W78, R80, R197, and 203–205 (RLS) contribute to the substrate site. Mg(2+) is bound at residue E216.

The protein belongs to the UPP synthase family. In terms of assembly, homodimer. Requires Mg(2+) as cofactor.

It carries out the reaction 8 isopentenyl diphosphate + (2E,6E)-farnesyl diphosphate = di-trans,octa-cis-undecaprenyl diphosphate + 8 diphosphate. Catalyzes the sequential condensation of isopentenyl diphosphate (IPP) with (2E,6E)-farnesyl diphosphate (E,E-FPP) to yield (2Z,6Z,10Z,14Z,18Z,22Z,26Z,30Z,34E,38E)-undecaprenyl diphosphate (di-trans,octa-cis-UPP). UPP is the precursor of glycosyl carrier lipid in the biosynthesis of bacterial cell wall polysaccharide components such as peptidoglycan and lipopolysaccharide. This Buchnera aphidicola subsp. Baizongia pistaciae (strain Bp) protein is Ditrans,polycis-undecaprenyl-diphosphate synthase ((2E,6E)-farnesyl-diphosphate specific).